The sequence spans 167 residues: Ribosome maturation factor RimM (167 aa).

The 73-residue stretch at 94-166 (TGRAYLHELI…YMVVPRFDEF (73 aa)) folds into the PRC barrel domain.

It belongs to the RimM family. Binds ribosomal protein uS19.

Its subcellular location is the cytoplasm. Its function is as follows. An accessory protein needed during the final step in the assembly of 30S ribosomal subunit, possibly for assembly of the head region. Essential for efficient processing of 16S rRNA. May be needed both before and after RbfA during the maturation of 16S rRNA. It has affinity for free ribosomal 30S subunits but not for 70S ribosomes. The chain is Ribosome maturation factor RimM from Chlorobium phaeobacteroides (strain DSM 266 / SMG 266 / 2430).